Here is a 275-residue protein sequence, read N- to C-terminus: Rhamnulose-1-phosphate aldolase (275 aa).

Residue Glu117 is part of the active site. Residues His141, His143, and His212 each coordinate Zn(2+).

The protein belongs to the aldolase class II family. RhaD subfamily. Homotetramer. Requires Zn(2+) as cofactor.

Its subcellular location is the cytoplasm. The catalysed reaction is L-rhamnulose 1-phosphate = (S)-lactaldehyde + dihydroxyacetone phosphate. Its pathway is carbohydrate degradation; L-rhamnose degradation; glycerone phosphate from L-rhamnose: step 3/3. In terms of biological role, catalyzes the reversible cleavage of L-rhamnulose-1-phosphate to dihydroxyacetone phosphate (DHAP) and L-lactaldehyde. The polypeptide is Rhamnulose-1-phosphate aldolase (Citrobacter koseri (strain ATCC BAA-895 / CDC 4225-83 / SGSC4696)).